Consider the following 147-residue polypeptide: Urease accessory protein UreE (147 aa).

The protein belongs to the UreE family.

The protein localises to the cytoplasm. Its function is as follows. Involved in urease metallocenter assembly. Binds nickel. Probably functions as a nickel donor during metallocenter assembly. The sequence is that of Urease accessory protein UreE from Marinomonas sp. (strain MWYL1).